Reading from the N-terminus, the 90-residue chain is Small ribosomal subunit protein uS17 (90 aa).

Belongs to the universal ribosomal protein uS17 family. Part of the 30S ribosomal subunit.

One of the primary rRNA binding proteins, it binds specifically to the 5'-end of 16S ribosomal RNA. The polypeptide is Small ribosomal subunit protein uS17 (Burkholderia mallei (strain NCTC 10247)).